The chain runs to 501 residues: Lysine--tRNA ligase (501 aa).

Positions 411 and 418 each coordinate Mg(2+).

This sequence belongs to the class-II aminoacyl-tRNA synthetase family. As to quaternary structure, homodimer. It depends on Mg(2+) as a cofactor.

It localises to the cytoplasm. It carries out the reaction tRNA(Lys) + L-lysine + ATP = L-lysyl-tRNA(Lys) + AMP + diphosphate. This is Lysine--tRNA ligase from Pseudomonas aeruginosa (strain LESB58).